The following is a 327-amino-acid chain: ABC transporter periplasmic-binding protein YphF (327 aa).

The signal sequence occupies residues 1-26 (MPTKMRTTRNLLLMATLLGSALFARA).

This sequence belongs to the bacterial solute-binding protein 2 family.

The protein localises to the periplasm. Probably part of the binding-protein-dependent transport system YphDEF. In Escherichia coli (strain K12), this protein is ABC transporter periplasmic-binding protein YphF (yphF).